Reading from the N-terminus, the 101-residue chain is Small ribosomal subunit protein uS14 (101 aa).

The tract at residues 1-21 is disordered; sequence MAKVSLIKKNESRKKKSQSLH. Residues 11–21 show a composition bias toward basic residues; that stretch reads ESRKKKSQSLH.

It belongs to the universal ribosomal protein uS14 family. Part of the 30S ribosomal subunit. Contacts proteins S3 and S10.

Binds 16S rRNA, required for the assembly of 30S particles and may also be responsible for determining the conformation of the 16S rRNA at the A site. The chain is Small ribosomal subunit protein uS14 from Rickettsia canadensis (strain McKiel).